Consider the following 197-residue polypeptide: Cytochrome c oxidase polypeptide 5, mitochondrial (197 aa).

Residues 1-13 constitute a mitochondrion transit peptide; sequence MFLRSVTRAAARS. Over 14 to 129 the chain is Mitochondrial matrix; it reads SAVPTTGLRS…KGENLKIFFK (116 aa). A helical transmembrane segment spans residues 130–147; that stretch reads VAQLTLVSFGIFYVIHLF. The Mitochondrial intermembrane segment spans residues 148-197; the sequence is AKPQPKTMTKEWQEASNEYAKQEKINPIYGISAEGYEGKGFVQSPPAEKQ.

This sequence belongs to the cytochrome c oxidase IV family. In terms of assembly, component of the cytochrome c oxidase (complex IV, CIV), a multisubunit enzyme composed of a catalytic core of 3 subunits and seevral supernumerary subunits. The complex exists as a monomer or a dimer and forms supercomplexes (SCs) in the inner mitochondrial membrane with ubiquinol-cytochrome c oxidoreductase (cytochrome b-c1 complex, complex III, CIII).

It is found in the mitochondrion inner membrane. The protein operates within energy metabolism; oxidative phosphorylation. Component of the cytochrome c oxidase, the last enzyme in the mitochondrial electron transport chain which drives oxidative phosphorylation. The respiratory chain contains 3 multisubunit complexes succinate dehydrogenase (complex II, CII), ubiquinol-cytochrome c oxidoreductase (cytochrome b-c1 complex, complex III, CIII) and cytochrome c oxidase (complex IV, CIV), that cooperate to transfer electrons derived from NADH and succinate to molecular oxygen, creating an electrochemical gradient over the inner membrane that drives transmembrane transport and the ATP synthase. Cytochrome c oxidase is the component of the respiratory chain that catalyzes the reduction of oxygen to water. Electrons originating from reduced cytochrome c in the intermembrane space (IMS) are transferred via the dinuclear copper A center (CU(A)) of subunit 2 and heme A of subunit 1 to the active site in subunit 1, a binuclear center (BNC) formed by heme A3 and copper B (CU(B)). The BNC reduces molecular oxygen to 2 water molecules using 4 electrons from cytochrome c in the IMS and 4 protons from the mitochondrial matrix. The sequence is that of Cytochrome c oxidase polypeptide 5, mitochondrial (cox5) from Aspergillus niger.